Here is a 670-residue protein sequence, read N- to C-terminus: RxLR effector protein PSR2 (670 aa).

A signal peptide spans 1-17; it reads MRLQCVVLFAALTLVAA. Positions 39 to 54 match the RxLR-dEER motif; sequence RLLRPGNPAGKEDEER. Asn-57 carries N-linked (GlcNAc...) asparagine glycosylation. Residues 79–126 form a WY1 repeat; sequence KLLKWADAKKPPETVFTRLRLDKTGTQLFDNTDFPVWAAYTRSVAQTD. The tract at residues 79 to 670 is 7 X 93 AA tandem repeats; that stretch reads KLLKWADAKK…YSAKFKVRWG (592 aa). The stretch at 127-217 is one LWY2 repeat; it reads SEASAVMLKT…NYMKLSNKEN (91 aa). Residues 218 to 308 form an LWY3 repeat; sequence PKAQTTLIAT…KYINYYNKEN (91 aa). Residues 309 to 399 form an LWY4 repeat; it reads PDEKTTVLAK…KYTENFNLNK (91 aa). The LWY5 repeat unit spans residues 400 to 492; that stretch reads EINEQVTAIQ…KFLEKYNTAN (93 aa). An LWY6 repeat occupies 493 to 583; it reads PGKEQTMISG…KYLNAFNDKA (91 aa). The LWY7 repeat unit spans residues 584–670; the sequence is PVKKALMIDT…YSAKFKVRWG (87 aa).

It belongs to the RxLR effector family. Interacts with host dsRNA-binding protein DRB4.

It localises to the secreted. It is found in the host cell. Functionally, secreted effector that possesses RNA silencing suppression activity by inhibiting the biogenesis of small RNAs in the host plant to promote enhanced susceptibility of host to the pathogen during infection. Interferes with secondary siRNA production by associating with host dsRNA-binding protein DRB4. Inhibits the host salicylic acid pathway during infection. This chain is RxLR effector protein PSR2, found in Phytophthora sojae (Soybean stem and root rot agent).